A 298-amino-acid polypeptide reads, in one-letter code: Nucleotide-binding protein MLBr00563 (298 aa).

21-28 contributes to the ATP binding site; the sequence is GLSGAGRG. 72 to 75 serves as a coordination point for GTP; that stretch reads DVRS.

Belongs to the RapZ-like family.

Displays ATPase and GTPase activities. The protein is Nucleotide-binding protein MLBr00563 of Mycobacterium leprae (strain Br4923).